The sequence spans 215 residues: Nascent polypeptide-associated complex subunit alpha (215 aa).

The disordered stretch occupies residues 1-81 (MPGEATETVP…SEKKARKAMS (81 aa)). Residues 9–28 (VPATEQELPQPQAETGSGTE) show a composition bias toward polar residues. Residues 29 to 42 (SDSDESVPELEEQD) are compositionally biased toward acidic residues. Serine 43 carries the post-translational modification Phosphoserine; by ILK1. Positions 44–57 (TQATTQQAQLAAAA) are enriched in low complexity. The required for DNA-binding stretch occupies residues 69-80 (QSRSEKKARKAM). The NAC-A/B domain occupies 70–135 (SRSEKKARKA…AKIEDLSQQA (66 aa)). Residues 93-108 (RVTIRKSKNILFVITK) are RNA/DNA-binding. Phosphoserine is present on serine 132. At lysine 142 the chain carries N6-acetyllysine; alternate. Residue lysine 142 forms a Glycyl lysine isopeptide (Lys-Gly) (interchain with G-Cter in SUMO2); alternate linkage. Threonine 159 is modified (phosphothreonine; by GSK3-beta). Threonine 161 carries the phosphothreonine modification. A phosphoserine mark is found at serine 166, serine 186, serine 191, and serine 203. A UBA domain is found at 176-213 (VEVKDIELVMSQANVSRAKAVRALKNNSNDIVNAIMEL).

Belongs to the NAC-alpha family. As to quaternary structure, interacts with TBP and JUN. Part of the nascent polypeptide-associated complex (NAC), which is a heterodimer of NACA and BTF3 (via NAC-A/B domains). NAC associates with ribosomes through the BTF3/NACB subunit and contacts the ribosomal protein L23, which is positioned near the exiting site. Both subunits can contact nascent polypeptide chains. NACA may also form homodimers, and only this form binds DNA. Post-translationally, phosphorylation of Thr-159 by GSK3B may promote proteasome mediated degradation. Phosphorylation of Ser-43 by ILK during cell adhesion may promote nuclear localization. As to expression, ubiquitously expressed.

Its subcellular location is the cytoplasm. It is found in the nucleus. Prevents inappropriate targeting of non-secretory polypeptides to the endoplasmic reticulum (ER). Binds to nascent polypeptide chains as they emerge from the ribosome and blocks their interaction with the signal recognition particle (SRP), which normally targets nascent secretory peptides to the ER. Also reduces the inherent affinity of ribosomes for protein translocation sites in the ER membrane (M sites). May act as a specific coactivator for JUN, binding to DNA and stabilizing the interaction of JUN homodimers with target gene promoters. This is Nascent polypeptide-associated complex subunit alpha (NACA) from Homo sapiens (Human).